We begin with the raw amino-acid sequence, 187 residues long: Calcium and integrin-binding family member 3 (187 aa).

EF-hand domains are found at residues 66–101, 103–138, and 144–179; these read KDNP…MSEM, PRDL…LTRG, and EVSL…APDF. The Ca(2+) site is built by D116, N118, D120, Y122, D127, D157, D159, D161, R163, and D168.

In terms of assembly, monomer and homodimer. Interacts with ITGA2B (via C-terminus cytoplasmic tail region); the interaction is stabilized/increased in a calcium and magnesium-dependent manner. Interacts with TMC1.

In terms of biological role, acts a an auxiliary subunit of the sensory mechanoelectrical transduction (MET) channel in hair cells. Plays a role in regulating hair cell MET channel localization and function. This Homo sapiens (Human) protein is Calcium and integrin-binding family member 3 (CIB3).